We begin with the raw amino-acid sequence, 1888 residues long: Protein mms22 (1888 aa).

Disordered stretches follow at residues 12 to 34, 151 to 258, and 316 to 354; these read DSQDSGSEWSNTHGSLISQRGNE, FSSD…ISSN, and RRKLHPRSTAKLSSELGNEISDSDNSISTPTPTDDSRFD. 3 stretches are compositionally biased toward polar residues: residues 13–32, 212–227, and 338–348; these read SQDSGSEWSNTHGSLISQRG, SNLNTADNDLALSSTI, and SDNSISTPTPT.

This sequence belongs to the MMS22 family.

The protein localises to the nucleus. Its function is as follows. Involved in protection against replication-dependent DNA damage. May act by restoring active replication forks, repairing unusual DNA structures, and/or preventing aberrant DNA rearrangement at arrested replication forks. The polypeptide is Protein mms22 (mus7) (Schizosaccharomyces pombe (strain 972 / ATCC 24843) (Fission yeast)).